The primary structure comprises 527 residues: Laccase-5 (527 aa).

Positions M1–G23 are cleaved as a signal peptide. The 126-residue stretch at I25–Y150 folds into the Plastocyanin-like 1 domain. N74 and N77 each carry an N-linked (GlcNAc...) asparagine glycan. Cu cation is bound by residues H87, H89, H132, and H134. 2 cysteine pairs are disulfide-bonded: C108–C516 and C140–C230. N156, N209, N233, N242, N276, N317, N358, N366, N393, and N402 each carry an N-linked (GlcNAc...) asparagine glycan. One can recognise a Plastocyanin-like 2 domain in the interval V162–Y306. Residues T373–D498 form the Plastocyanin-like 3 domain. The Cu cation site is built by H425, H428, H430, H480, C481, H482, and H486.

The protein belongs to the multicopper oxidase family. Homodimer. Cu cation serves as cofactor.

It is found in the secreted. The catalysed reaction is 4 hydroquinone + O2 = 4 benzosemiquinone + 2 H2O. Lignin degradation and detoxification of lignin-derived products. This chain is Laccase-5 (LCC5), found in Trametes villosa (White-rot fungus).